We begin with the raw amino-acid sequence, 610 residues long: Glutamine--fructose-6-phosphate aminotransferase [isomerizing] (610 aa).

Cysteine 2 serves as the catalytic Nucleophile; for GATase activity. The 219-residue stretch at 2-220 (CGIISAISKK…EGDIAILSHK (219 aa)) folds into the Glutamine amidotransferase type-2 domain. SIS domains lie at 289–429 (AHAL…LKTN) and 461–600 (LAKE…IDKP). The For Fru-6P isomerization activity role is filled by lysine 605.

As to quaternary structure, homodimer.

The protein localises to the cytoplasm. The enzyme catalyses D-fructose 6-phosphate + L-glutamine = D-glucosamine 6-phosphate + L-glutamate. In terms of biological role, catalyzes the first step in hexosamine metabolism, converting fructose-6P into glucosamine-6P using glutamine as a nitrogen source. This is Glutamine--fructose-6-phosphate aminotransferase [isomerizing] from Buchnera aphidicola subsp. Baizongia pistaciae (strain Bp).